Reading from the N-terminus, the 127-residue chain is Fluoride-specific ion channel FluC (127 aa).

A run of 4 helical transmembrane segments spans residues 8 to 28 (LLIA…QYWF), 37 to 57 (PWGT…VYAI), 68 to 88 (WKFL…TFSY), and 100 to 120 (ILFL…AFAG). Residues glycine 78 and threonine 81 each coordinate Na(+).

The protein belongs to the fluoride channel Fluc/FEX (TC 1.A.43) family.

It is found in the cell inner membrane. It catalyses the reaction fluoride(in) = fluoride(out). Na(+) is not transported, but it plays an essential structural role and its presence is essential for fluoride channel function. Fluoride-specific ion channel. Important for reducing fluoride concentration in the cell, thus reducing its toxicity. This Leptospira interrogans serogroup Icterohaemorrhagiae serovar Lai (strain 56601) protein is Fluoride-specific ion channel FluC.